A 628-amino-acid polypeptide reads, in one-letter code: MEPPDARAGARRAPRLLVLALLLAAPPGSKAEVRLSVPPLVEVMRGESVTLDCSPLGTHDYFMLEWFLVDRSGARHRLASAELRGSELRDKELNSRGRSPPYQLDSQGRLVLPEAQVGDERDYVCVVKAGAAGTAEATARLKVFAKPEAPEVSPNKGILSVMDDFAQEIATCSSRNGNPAPQIMWYRNGQPLAVPLEVNSEGYMTTRTVREASGLLSLTSTLYLRLHKPDREASFHCSVHYYLPAGQHGRLDGPSFSLTLHYPTEHVLFWLGSQSTAEGWVREGDSVQLLCQGDGSPTPEYTFFWLQDKQEDVLKTSLEGNLTLERVQRNQSGTYGCRVEDFDVPEDAELSKTLELRVAYLDSLELSAGEELSLPLHNSTTVTCSARGLPTPTLYWTKDSAPMGEDPTLSLHSVTFDSAGTYTCEAYMPRIPLLSRTRSFRLLVQGTPELKAKETQPKAEGSWTEGDEVTLICYARGYPKPKLTWSQLGGSPTEPAPGGQGWVSSSLTLKVTSALSQDGVSCEASNPLGNTHHVFHFGTVAPQTSQAGVAVMAVAISVALLLLVVAVFYCMRRKGRPGCCQWGEKGSPPPGEPKLSHSGSQRPEQTGLLMGSASGGAKHGSGGFGDEC.

The first 31 residues, 1-31 (MEPPDARAGARRAPRLLVLALLLAAPPGSKA), serve as a signal peptide directing secretion. 2 consecutive Ig-like V-type domains span residues 32–142 (EVRL…ARLK) and 150–253 (PEVS…RLDG). Residues 32 to 547 (EVRLSVPPLV…GTVAPQTSQA (516 aa)) are Extracellular-facing. Disulfide bonds link Cys-53–Cys-125, Cys-172–Cys-237, and Cys-291–Cys-337. Ig-like C2-type domains follow at residues 254–355 (PSFS…KTLE), 355–441 (ELRV…RSFR), and 448–538 (PELK…FHFG). N-linked (GlcNAc...) asparagine glycosylation is found at Asn-321, Asn-330, and Asn-378. 2 cysteine pairs are disulfide-bonded: Cys-384-Cys-424 and Cys-473-Cys-522. A helical membrane pass occupies residues 548–568 (GVAVMAVAISVALLLLVVAVF). Residues 569-628 (YCMRRKGRPGCCQWGEKGSPPPGEPKLSHSGSQRPEQTGLLMGSASGGAKHGSGGFGDEC) lie on the Cytoplasmic side of the membrane. The tract at residues 580–628 (CQWGEKGSPPPGEPKLSHSGSQRPEQTGLLMGSASGGAKHGSGGFGDEC) is disordered. 4 positions are modified to phosphoserine: Ser-596, Ser-598, Ser-600, and Ser-621. A compositionally biased stretch (gly residues) spans 613–628 (ASGGAKHGSGGFGDEC).

As to quaternary structure, homodimer. Interacts with ITGA4:ITGB1. Interacts with spectrins SPTA1 and SPTB1. Epinephrine-stimulated phosphorylation of Ser-621 by PKA enhances adhesion to laminin. Ser-621 can also be phosphorylated by AKT1.

The protein localises to the cell membrane. In terms of biological role, transmembrane glycoprotein that functions as both a receptor and an adhesion molecule playing a crucial role in cell adhesion, motility, migration and invasion. Extracellular domain enables binding to extracellular matrix proteins, such as laminin, integrin and other ligands while its intracellular domain interacts with cytoskeletal proteins like hemoglobin, facilitating cell signal transduction. Serves as a receptor for laminin alpha-5/LAMA5 to promote cell adhesion. Mechanistically, JAK2 induces BCAM phosphorylation and activates its adhesion to laminin by stimulating a Rap1/AKT signaling pathway in the absence of EPOR. This Bos taurus (Bovine) protein is Basal cell adhesion molecule (BCAM).